A 245-amino-acid chain; its full sequence is 1-(5-phosphoribosyl)-5-[(5-phosphoribosylamino)methylideneamino] imidazole-4-carboxamide isomerase (245 aa).

Aspartate 11 functions as the Proton acceptor in the catalytic mechanism. Residue aspartate 132 is the Proton donor of the active site.

Belongs to the HisA/HisF family.

The protein resides in the cytoplasm. The enzyme catalyses 1-(5-phospho-beta-D-ribosyl)-5-[(5-phospho-beta-D-ribosylamino)methylideneamino]imidazole-4-carboxamide = 5-[(5-phospho-1-deoxy-D-ribulos-1-ylimino)methylamino]-1-(5-phospho-beta-D-ribosyl)imidazole-4-carboxamide. It participates in amino-acid biosynthesis; L-histidine biosynthesis; L-histidine from 5-phospho-alpha-D-ribose 1-diphosphate: step 4/9. This is 1-(5-phosphoribosyl)-5-[(5-phosphoribosylamino)methylideneamino] imidazole-4-carboxamide isomerase from Geobacillus thermodenitrificans (strain NG80-2).